The sequence spans 600 residues: Transcription factor efl-3 (600 aa).

The interval 35 to 65 (LPEPRVNRTTDPDHENLLPSPVPRPSPAMSQ) is disordered. A compositionally biased stretch (basic and acidic residues) spans 39–50 (RVNRTTDPDHEN). 2 DNA-binding regions span residues 95–164 (RKEK…QWQG) and 253–343 (RDRQ…VYCG).

Belongs to the E2F/DP family.

The protein localises to the nucleus. Its function is as follows. Probable transcription factor which represses gene expression in a subset of ventral nerve cord neurons. Involved in regulating programmed cell death and determining cell fate during development, acting in a partially redundant manner with lin-39 to repress the BH3 domain-encoding gene egl-1 in the VA and VB motor neurons. The polypeptide is Transcription factor efl-3 (Caenorhabditis elegans).